Here is a 200-residue protein sequence, read N- to C-terminus: Small ribosomal subunit protein uS4 (200 aa).

An S4 RNA-binding domain is found at Arg-106–Ile-170. The disordered stretch occupies residues Ala-178–Glu-200. Basic and acidic residues predominate over residues Glu-179 to Ala-190.

This sequence belongs to the universal ribosomal protein uS4 family. In terms of assembly, part of the 30S ribosomal subunit. Contacts protein S5. The interaction surface between S4 and S5 is involved in control of translational fidelity.

Its function is as follows. One of the primary rRNA binding proteins, it binds directly to 16S rRNA where it nucleates assembly of the body of the 30S subunit. With S5 and S12 plays an important role in translational accuracy. This chain is Small ribosomal subunit protein uS4, found in Thermoplasma volcanium (strain ATCC 51530 / DSM 4299 / JCM 9571 / NBRC 15438 / GSS1).